The following is a 138-amino-acid chain: ATP synthase epsilon chain (138 aa).

This sequence belongs to the ATPase epsilon chain family. In terms of assembly, F-type ATPases have 2 components, CF(1) - the catalytic core - and CF(0) - the membrane proton channel. CF(1) has five subunits: alpha(3), beta(3), gamma(1), delta(1), epsilon(1). CF(0) has three main subunits: a, b and c.

It is found in the cell inner membrane. Its function is as follows. Produces ATP from ADP in the presence of a proton gradient across the membrane. This is ATP synthase epsilon chain from Geobacter sp. (strain M21).